We begin with the raw amino-acid sequence, 105 residues long: 3-phenylpropionate/cinnamic acid dioxygenase ferredoxin subunit (105 aa).

The 96-residue stretch at 4-99 (LFVCTVEELP…VVVKDGNIYI (96 aa)) folds into the Rieske domain. [2Fe-2S] cluster-binding residues include cysteine 42, histidine 44, cysteine 62, and histidine 65.

It belongs to the bacterial ring-hydroxylating dioxygenase ferredoxin component family. As to quaternary structure, this dioxygenase system consists of four proteins: the two subunits of the hydroxylase component (HcaE and HcaF), a ferredoxin (HcaC) and a ferredoxin reductase (HcaD). It depends on [2Fe-2S] cluster as a cofactor.

Its pathway is aromatic compound metabolism; 3-phenylpropanoate degradation. In terms of biological role, part of the multicomponent 3-phenylpropionate dioxygenase, that converts 3-phenylpropionic acid (PP) and cinnamic acid (CI) into 3-phenylpropionate-dihydrodiol (PP-dihydrodiol) and cinnamic acid-dihydrodiol (CI-dihydrodiol), respectively. This protein seems to be a 2Fe-2S ferredoxin. The protein is 3-phenylpropionate/cinnamic acid dioxygenase ferredoxin subunit of Photorhabdus laumondii subsp. laumondii (strain DSM 15139 / CIP 105565 / TT01) (Photorhabdus luminescens subsp. laumondii).